The chain runs to 101 residues: Protein Tat (101 aa).

The segment at 1–20 is disordered; it reads MEPVDPSLEPWKHPGSQPKT. The interval 1-24 is interaction with human CREBBP; sequence MEPVDPSLEPWKHPGSQPKTACTN. The transactivation stretch occupies residues 1–48; sequence MEPVDPSLEPWKHPGSQPKTACTNCYCKKCCLHCQVCFTTKGLGISYG. The Zn(2+) site is built by cysteine 22, cysteine 25, and cysteine 27. A cysteine-rich region spans residues 22-37; sequence CTNCYCKKCCLHCQVC. Lysine 28 is subject to N6-acetyllysine; by host PCAF. Residues cysteine 30, histidine 33, cysteine 34, and cysteine 37 each coordinate Zn(2+). Residues 38-48 are core; it reads FTTKGLGISYG. The interval 45 to 101 is disordered; the sequence is ISYGRKKRRQRRRPPQDSQTHQVSLPKQPSSQQRGDPTGPKESKKKVERETETDPDN. Positions 48 to 57 are enriched in basic residues; sequence GRKKRRQRRR. A Nuclear localization signal, RNA-binding (TAR), and protein transduction motif is present at residues 49 to 57; that stretch reads RKKRRQRRR. The segment at 49-86 is interaction with the host capping enzyme RNGTT; sequence RKKRRQRRRPPQDSQTHQVSLPKQPSSQQRGDPTGPKE. Lysine 50 and lysine 51 each carry N6-acetyllysine; by host EP300 and GCN5L2. 2 positions are modified to asymmetric dimethylarginine; by host PRMT6: arginine 52 and arginine 53. Positions 61–79 are enriched in polar residues; it reads DSQTHQVSLPKQPSSQQRG. A Glycyl lysine isopeptide (Lys-Gly) (interchain with G-Cter in ubiquitin) cross-link involves residue lysine 71. The Cell attachment site signature appears at 78-80; it reads RGD. The span at 83-101 shows a compositional bias: basic and acidic residues; the sequence is GPKESKKKVERETETDPDN.

Belongs to the lentiviruses Tat family. As to quaternary structure, interacts with host CCNT1. Associates with the P-TEFb complex composed at least of Tat, P-TEFb (CDK9 and CCNT1), TAR RNA, RNA Pol II. Recruits the HATs CREBBP, TAF1/TFIID, EP300, PCAF and GCN5L2. Interacts with host KAT5/Tip60; this interaction targets the latter to degradation. Interacts with the host deacetylase SIRT1. Interacts with host capping enzyme RNGTT; this interaction stimulates RNGTT. Binds to host KDR, and to the host integrins ITGAV/ITGB3 and ITGA5/ITGB1. Interacts with host KPNB1/importin beta-1 without previous binding to KPNA1/importin alpha-1. Interacts with EIF2AK2. Interacts with host nucleosome assembly protein NAP1L1; this interaction may be required for the transport of Tat within the nucleus, since the two proteins interact at the nuclear rim. Interacts with host C1QBP/SF2P32; this interaction involves lysine-acetylated Tat. Interacts with the host chemokine receptors CCR2, CCR3 and CXCR4. Interacts with host DPP4/CD26; this interaction may trigger an anti-proliferative effect. Interacts with host LDLR. Interacts with the host extracellular matrix metalloproteinase MMP1. Interacts with host PRMT6; this interaction mediates Tat's methylation. Interacts with, and is ubiquitinated by MDM2/Hdm2. Interacts with host PSMC3 and HTATIP2. Interacts with STAB1; this interaction may overcome SATB1-mediated repression of IL2 and IL2RA (interleukin) in T cells by binding to the same domain than HDAC1. Interacts (when acetylated) with human CDK13, thereby increasing HIV-1 mRNA splicing and promoting the production of the doubly spliced HIV-1 protein Nef. Interacts with host TBP; this interaction modulates the activity of transcriptional pre-initiation complex. Interacts with host RELA. Interacts with host PLSCR1; this interaction negatively regulates Tat transactivation activity by altering its subcellular distribution. Post-translationally, asymmetrical arginine methylation by host PRMT6 seems to diminish the transactivation capacity of Tat and affects the interaction with host CCNT1. Acetylation by EP300, CREBBP, GCN5L2/GCN5 and PCAF regulates the transactivation activity of Tat. EP300-mediated acetylation of Lys-50 promotes dissociation of Tat from the TAR RNA through the competitive binding to PCAF's bromodomain. In addition, the non-acetylated Tat's N-terminus can also interact with PCAF. PCAF-mediated acetylation of Lys-28 enhances Tat's binding to CCNT1. Lys-50 is deacetylated by SIRT1. In terms of processing, polyubiquitination by host MDM2 does not target Tat to degradation, but activates its transactivation function and fosters interaction with CCNT1 and TAR RNA. Post-translationally, phosphorylated by EIF2AK2 on serine and threonine residues adjacent to the basic region important for TAR RNA binding and function. Phosphorylation of Tat by EIF2AK2 is dependent on the prior activation of EIF2AK2 by dsRNA.

Its subcellular location is the host nucleus. The protein resides in the host nucleolus. It is found in the host cytoplasm. It localises to the secreted. In terms of biological role, transcriptional activator that increases RNA Pol II processivity, thereby increasing the level of full-length viral transcripts. Recognizes a hairpin structure at the 5'-LTR of the nascent viral mRNAs referred to as the transactivation responsive RNA element (TAR) and recruits the cyclin T1-CDK9 complex (P-TEFb complex) that will in turn hyperphosphorylate the RNA polymerase II to allow efficient elongation. The CDK9 component of P-TEFb and other Tat-activated kinases hyperphosphorylate the C-terminus of RNA Pol II that becomes stabilized and much more processive. Other factors such as HTATSF1/Tat-SF1, SUPT5H/SPT5, and HTATIP2 are also important for Tat's function. Besides its effect on RNA Pol II processivity, Tat induces chromatin remodeling of proviral genes by recruiting the histone acetyltransferases (HATs) CREBBP, EP300 and PCAF to the chromatin. This also contributes to the increase in proviral transcription rate, especially when the provirus integrates in transcriptionally silent region of the host genome. To ensure maximal activation of the LTR, Tat mediates nuclear translocation of NF-kappa-B by interacting with host RELA. Through its interaction with host TBP, Tat may also modulate transcription initiation. Tat can reactivate a latently infected cell by penetrating in it and transactivating its LTR promoter. In the cytoplasm, Tat is thought to act as a translational activator of HIV-1 mRNAs. Extracellular circulating Tat can be endocytosed by surrounding uninfected cells via the binding to several surface receptors such as CD26, CXCR4, heparan sulfate proteoglycans (HSPG) or LDLR. Neurons are rarely infected, but they internalize Tat via their LDLR. Through its interaction with nuclear HATs, Tat is potentially able to control the acetylation-dependent cellular gene expression. Modulates the expression of many cellular genes involved in cell survival, proliferation or in coding for cytokines or cytokine receptors. Tat plays a role in T-cell and neurons apoptosis. Tat induced neurotoxicity and apoptosis probably contribute to neuroAIDS. Circulating Tat also acts as a chemokine-like and/or growth factor-like molecule that binds to specific receptors on the surface of the cells, affecting many cellular pathways. In the vascular system, Tat binds to ITGAV/ITGB3 and ITGA5/ITGB1 integrins dimers at the surface of endothelial cells and competes with bFGF for heparin-binding sites, leading to an excess of soluble bFGF. The sequence is that of Protein Tat from Homo sapiens (Human).